Here is a 118-residue protein sequence, read N- to C-terminus: Putative ankyrin repeat protein R747 (118 aa).

An ANK repeat occupies 70-99 (NCYYLLDYAIMKNDIPVIVTLIEKGANINR).

In Acanthamoeba polyphaga (Amoeba), this protein is Putative ankyrin repeat protein R747.